Consider the following 427-residue polypeptide: ATP-dependent RNA helicase DDX39A (427 aa).

Over residues 1-19 (MAEQDVENELLDYDEDEEP) the composition is skewed to acidic residues. The segment at 1-35 (MAEQDVENELLDYDEDEEPQVPQESTPAPPKKDVK) is disordered. An N-acetylalanine modification is found at A2. K31 participates in a covalent cross-link: Glycyl lysine isopeptide (Lys-Gly) (interchain with G-Cter in SUMO2). K35 carries the post-translational modification N6-acetyllysine; alternate. Residue K35 forms a Glycyl lysine isopeptide (Lys-Gly) (interchain with G-Cter in SUMO2); alternate linkage. Phosphoserine is present on S37. Positions 44 to 72 (SGFRDFLLKPELLRAIVDCGFEHPSEVQH) match the Q motif motif. The 174-residue stretch at 75-248 (IPQAILGMDV…RKFMQDPMEV (174 aa)) folds into the Helicase ATP-binding domain. Residue 88–95 (AKSGMGKT) coordinates ATP. Residues K154 and K162 each participate in a glycyl lysine isopeptide (Lys-Gly) (interchain with G-Cter in SUMO2) cross-link. A Phosphothreonine modification is found at T171. The short motif at 195-198 (DECD) is the DECD box element. Glycyl lysine isopeptide (Lys-Gly) (interchain with G-Cter in SUMO2) cross-links involve residues K240 and K255. Residues 260-421 (GLQQYYVKLK…ELPEEIDIST (162 aa)) enclose the Helicase C-terminal domain. S426 is modified (phosphoserine).

Belongs to the DEAD box helicase family. DECD subfamily. In terms of assembly, binds ALYREF/THOC4 and DDX39B/BAT1. Interacts with the apo-AREX complex component SARNP. Interacts with MX1. Interacts with MCM3AP isoform GANP. Interacts with ECD. Interacts with PHAX; this interaction stimulates PHAX RNA binding activity. SUMOylated by RANBP2; SUMOylation modification affects its ability to bind RNA.

The protein resides in the nucleus. The protein localises to the cytoplasm. It catalyses the reaction ATP + H2O = ADP + phosphate + H(+). Functionally, helicase that plays an essential role in mRNA export and is involved in multiple steps in RNA metabolism including alternative splicing. Regulates nuclear mRNA export to the cytoplasm through association with ECD. Also involved in spliceosomal uridine-rich small nuclear RNA (U snRNA) export by stimulating the RNA binding of adapter PHAX. Plays a role in the negative regulation of type I IFN production by increasing the nuclear retention of antiviral transcripts and thus reducing their protein expression. Independently of the interferon pathway, plays an antiviral role against alphaviruses by binding to a 5' conserved sequence element in the viral genomic RNA. The protein is ATP-dependent RNA helicase DDX39A (Ddx39a) of Rattus norvegicus (Rat).